The primary structure comprises 290 residues: Ribosomal RNA small subunit methyltransferase A (290 aa).

Residues Asn-27, Leu-29, Gly-54, Glu-75, Asp-100, and Asn-125 each coordinate S-adenosyl-L-methionine.

It belongs to the class I-like SAM-binding methyltransferase superfamily. rRNA adenine N(6)-methyltransferase family. RsmA subfamily.

Its subcellular location is the cytoplasm. The enzyme catalyses adenosine(1518)/adenosine(1519) in 16S rRNA + 4 S-adenosyl-L-methionine = N(6)-dimethyladenosine(1518)/N(6)-dimethyladenosine(1519) in 16S rRNA + 4 S-adenosyl-L-homocysteine + 4 H(+). Specifically dimethylates two adjacent adenosines (A1518 and A1519) in the loop of a conserved hairpin near the 3'-end of 16S rRNA in the 30S particle. May play a critical role in biogenesis of 30S subunits. This Streptococcus pyogenes serotype M18 (strain MGAS8232) protein is Ribosomal RNA small subunit methyltransferase A.